Here is a 535-residue protein sequence, read N- to C-terminus: cAMP-regulated D2 protein (535 aa).

The first 20 residues, Met1–Ala20, serve as a signal peptide directing secretion. Cysteines 89 and 109 form a disulfide. The active-site Acyl-ester intermediate is the Ser213. A disulfide bridge links Cys265 with Cys272. Active-site charge relay system residues include Glu338 and His440. The N-linked (GlcNAc...) asparagine glycan is linked to Asn500.

Belongs to the type-B carboxylesterase/lipase family.

It is found in the cytoplasmic vesicle. Its subcellular location is the esterosome membrane. The polypeptide is cAMP-regulated D2 protein (D2) (Dictyostelium discoideum (Social amoeba)).